We begin with the raw amino-acid sequence, 439 residues long: Ectonucleotide pyrophosphatase/phosphodiesterase family member 7 (439 aa).

Positions 1-21 are cleaved as a signal peptide; it reads MGHSAVLLSVALVILPACVTG. Over 22–422 the chain is Extracellular; it reads GPVQRQQQHK…RSGSPLSRQH (401 aa). 2 residues coordinate Zn(2+): Asp-38 and Thr-74. A required for enzyme activity region spans residues 71 to 77; that stretch reads VTMTSPC. The Nucleophile role is filled by Thr-74. Asn-95 is a substrate binding site. N-linked (GlcNAc...) asparagine glycans are attached at residues Asn-99, Asn-120, Asn-145, and Asn-167. Zn(2+)-binding residues include Asp-198, His-202, Asp-245, and His-246. A glycan (N-linked (GlcNAc...) asparagine) is linked at Asn-266. His-352 is a binding site for Zn(2+). A helical transmembrane segment spans residues 423-439; sequence HLVVVLMGILTGLAKVV.

It belongs to the nucleotide pyrophosphatase/phosphodiesterase family. Zn(2+) serves as cofactor. Post-translationally, N-glycosylated; required for activity and transport to the plasma membrane. As to expression, detected in small intestine (at protein level). Highly expressed in the jejunum.

The protein localises to the cell membrane. It catalyses the reaction a sphingomyelin + H2O = phosphocholine + an N-acylsphing-4-enine + H(+). It carries out the reaction a 1-O-alkyl-2-acetyl-sn-glycero-3-phosphocholine + H2O = a 1-O-alkyl-2-acetyl-sn-glycerol + phosphocholine + H(+). The enzyme catalyses 1-O-octadecyl-2-acetyl-sn-glycero-3-phosphocholine + H2O = 1-O-octadecyl-2-acetyl-sn-glycerol + phosphocholine + H(+). The catalysed reaction is 1-hexadecanoyl-sn-glycero-3-phosphocholine + H2O = 1-hexadecanoyl-sn-glycerol + phosphocholine + H(+). Its activity is regulated as follows. platelet-activating factor hydrolysis is inhibited by higher amount of sphingomyelin. The hydrolysis of platelet-activating factor and sphingomyelin can be inhibited by the presence of sphingomyelin and platelet-activating factor respectively, the inhibition of platelet-activating factor hydrolysis by sphingomyelin being stronger. PAF hydrolysis is dose-dependently increased by both taurocholate (TC) and taurodeoxycholate (TDC). Hydrolase activity against PAF is inhibited by EDTA and stimulated by 0.1-0.25 mM Zn2+. In terms of biological role, choline-specific phosphodiesterase that hydrolyzes sphingomyelin (SM) releasing the ceramide and phosphocholine and therefore is involved in sphingomyelin digestion, ceramide formation, and fatty acid (FA) absorption in the gastrointestinal tract. Also has phospholipase C activity and can also cleave phosphocholine from palmitoyl lyso-phosphatidylcholine and platelet-activating factor (PAF) leading to its inactivation. Does not have nucleotide pyrophosphatase activity. May promote cholesterol absorption by affecting the levels of sphingomyelin derived from either diet or endogenous sources, in the intestinal lumen. The sequence is that of Ectonucleotide pyrophosphatase/phosphodiesterase family member 7 from Rattus norvegicus (Rat).